Here is a 279-residue protein sequence, read N- to C-terminus: Movement protein (279 aa).

A compositionally biased stretch (low complexity) spans 256 to 266 (PPIAIGSPSAS). Positions 256–279 (PPIAIGSPSASRNNSFRSQVVNGL) are disordered. Residues 267–279 (RNNSFRSQVVNGL) show a composition bias toward polar residues.

The protein belongs to the cucumovirus movement protein family.

The protein resides in the host cell junction. It is found in the host plasmodesma. Functionally, transports viral genome to neighboring plant cells directly through plasmosdesmata, without any budding. The movement protein allows efficient cell to cell propagation, by bypassing the host cell wall barrier. Acts by forming a tubular structure at the host plasmodesmata, enlarging it enough to allow free passage of virion capsids. This chain is Movement protein, found in Cucumis sativus (Cucumber).